We begin with the raw amino-acid sequence, 175 residues long: Glutamyl-tRNA(Gln) amidotransferase subunit F, mitochondrial (175 aa).

A mitochondrion-targeting transit peptide spans Met1 to Tyr19.

The protein belongs to the GatF family. As to quaternary structure, subunit of the heterotrimeric GatFAB amidotransferase (AdT) complex, composed of A, B and F subunits.

The protein resides in the mitochondrion inner membrane. The enzyme catalyses L-glutamyl-tRNA(Gln) + L-glutamine + ATP + H2O = L-glutaminyl-tRNA(Gln) + L-glutamate + ADP + phosphate + H(+). In terms of biological role, allows the formation of correctly charged Gln-tRNA(Gln) through the transamidation of misacylated Glu-tRNA(Gln) in the mitochondria. The reaction takes place in the presence of glutamine and ATP through an activated gamma-phospho-Glu-tRNA(Gln). Required for proper protein synthesis within the mitochondrion. The sequence is that of Glutamyl-tRNA(Gln) amidotransferase subunit F, mitochondrial from Lachancea thermotolerans (strain ATCC 56472 / CBS 6340 / NRRL Y-8284) (Yeast).